The following is a 1681-amino-acid chain: Meiosis regulator and mRNA stability factor 1 (1681 aa).

The 138-residue stretch at 340–477 (IGVFWDIENC…ALLHHAHELI (138 aa)) folds into the NYN domain. Disordered stretches follow at residues 576–595 (VNET…PKKV) and 638–717 (QMQS…DVVF). Positions 638–647 (QMQSKSNKTS) are enriched in polar residues. Residues 648-658 (QQEKDKKRNGD) are compositionally biased toward basic and acidic residues. Polar residues predominate over residues 659–690 (KQGTLSQSSPLCTNQMLQTARNVGTDNTASKS). Over residues 692–715 (QKRDDTTRKSNADSQKEQKNKEDV) the composition is skewed to basic and acidic residues. An RRM domain is found at 779-858 (ADIQIGNLDY…KRIQVSLATG (80 aa)). 8 consecutive HTH OST-type domains span residues 863–937 (SLSL…SPMG), 991–1067 (SLKT…HNKP), 1087–1161 (QLIQ…LTHR), 1163–1238 (QVKR…IPKR), 1247–1321 (RTKQ…LTEM), 1323–1398 (RIKA…INRK), 1399–1472 (SLRS…SVQL), and 1474–1548 (SLYV…LKND). Residues 1637-1648 (EPSTQNICPQES) are compositionally biased toward polar residues. Positions 1637–1662 (EPSTQNICPQESKSTKELPESPVKRQ) are disordered. Positions 1649–1659 (KSTKELPESPV) are enriched in basic and acidic residues.

It localises to the peroxisome. Its function is as follows. Essential regulator of oogenesis required for female meiotic progression to repress transposable elements and preventing their mobilization, which is essential for the germline integrity. The polypeptide is Meiosis regulator and mRNA stability factor 1 (Xenopus tropicalis (Western clawed frog)).